The following is a 146-amino-acid chain: Large ribosomal subunit protein uL15 (146 aa).

The segment at 1–64 (MELNSIKPAA…MPMHRRLPKR (64 aa)) is disordered. The segment covering 30-39 (TATKGHKGQK) has biased composition (basic residues).

Belongs to the universal ribosomal protein uL15 family. Part of the 50S ribosomal subunit.

Functionally, binds to the 23S rRNA. This chain is Large ribosomal subunit protein uL15, found in Geotalea daltonii (strain DSM 22248 / JCM 15807 / FRC-32) (Geobacter daltonii).